We begin with the raw amino-acid sequence, 362 residues long: 3-dehydroquinate synthase (362 aa).

NAD(+) is bound by residues 71 to 76, 105 to 109, 129 to 130, lysine 142, lysine 151, and 169 to 172; these read DGEQYK, GVIGD, TT, and CLKT. Zn(2+)-binding residues include glutamate 184, histidine 247, and histidine 264.

It belongs to the sugar phosphate cyclases superfamily. Dehydroquinate synthase family. The cofactor is Co(2+). Zn(2+) is required as a cofactor. It depends on NAD(+) as a cofactor.

It localises to the cytoplasm. The catalysed reaction is 7-phospho-2-dehydro-3-deoxy-D-arabino-heptonate = 3-dehydroquinate + phosphate. It functions in the pathway metabolic intermediate biosynthesis; chorismate biosynthesis; chorismate from D-erythrose 4-phosphate and phosphoenolpyruvate: step 2/7. Its function is as follows. Catalyzes the conversion of 3-deoxy-D-arabino-heptulosonate 7-phosphate (DAHP) to dehydroquinate (DHQ). This Salmonella enteritidis PT4 (strain P125109) protein is 3-dehydroquinate synthase.